We begin with the raw amino-acid sequence, 319 residues long: MSLNFLDFEQPIAELEAKIDSLTAVSRQDEKLDINIDEEVHRLREKSVELTRKIFADLGAWQVAQLARHPQRPYTLDYVRLAFDEFDELAGDRAYADDKAIVGGIARLEGRPVMIIGHQKGRETKEKIRRNFGMPAPEGYRKALRLMEMAERFNMPIITFIDTPGAYPGVGAEERGQSEAIARNLREMSRLNVPVICTVIGEGGSGGALAIGVGDKVNMLQYSTYSVISPEGCASILWKSADKAPLAAEAMGIIAPRLKELKLIDSIIPEPLGGAHRNPEAMAASLKAQLLEDLADLDVLSTDDLKNRRYQRLMSYGYA.

Residues 35–296 (NIDEEVHRLR…KAQLLEDLAD (262 aa)) form the CoA carboxyltransferase C-terminal domain.

This sequence belongs to the AccA family. In terms of assembly, acetyl-CoA carboxylase is a heterohexamer composed of biotin carboxyl carrier protein (AccB), biotin carboxylase (AccC) and two subunits each of ACCase subunit alpha (AccA) and ACCase subunit beta (AccD).

Its subcellular location is the cytoplasm. It catalyses the reaction N(6)-carboxybiotinyl-L-lysyl-[protein] + acetyl-CoA = N(6)-biotinyl-L-lysyl-[protein] + malonyl-CoA. It participates in lipid metabolism; malonyl-CoA biosynthesis; malonyl-CoA from acetyl-CoA: step 1/1. Functionally, component of the acetyl coenzyme A carboxylase (ACC) complex. First, biotin carboxylase catalyzes the carboxylation of biotin on its carrier protein (BCCP) and then the CO(2) group is transferred by the carboxyltransferase to acetyl-CoA to form malonyl-CoA. The sequence is that of Acetyl-coenzyme A carboxylase carboxyl transferase subunit alpha from Salmonella agona (strain SL483).